The following is a 206-amino-acid chain: Proteasome subunit beta 1 (206 aa).

The propeptide at 1–14 is removed in mature form; by autocatalysis; it reads MSRIHNDPKVLLTG. Threonine 15 functions as the Nucleophile in the catalytic mechanism.

Belongs to the peptidase T1B family. In terms of assembly, the 20S proteasome core is composed of 14 alpha and 14 beta subunits that assemble into four stacked heptameric rings, resulting in a barrel-shaped structure. The two inner rings, each composed of seven catalytic beta subunits, are sandwiched by two outer rings, each composed of seven alpha subunits. The catalytic chamber with the active sites is on the inside of the barrel. Has a gated structure, the ends of the cylinder being occluded by the N-termini of the alpha-subunits. Is capped at one or both ends by the proteasome regulatory ATPase, PAN.

It is found in the cytoplasm. It catalyses the reaction Cleavage of peptide bonds with very broad specificity.. Its activity is regulated as follows. The formation of the proteasomal ATPase PAN-20S proteasome complex, via the docking of the C-termini of PAN into the intersubunit pockets in the alpha-rings, triggers opening of the gate for substrate entry. Interconversion between the open-gate and close-gate conformations leads to a dynamic regulation of the 20S proteasome proteolysis activity. Functionally, component of the proteasome core, a large protease complex with broad specificity involved in protein degradation. This Caldivirga maquilingensis (strain ATCC 700844 / DSM 13496 / JCM 10307 / IC-167) protein is Proteasome subunit beta 1.